The primary structure comprises 291 residues: Nucleotide-binding protein RALTA_A0325 (291 aa).

An ATP-binding site is contributed by 8 to 15 (GISGSGKS). 57 to 60 (DIRS) contributes to the GTP binding site.

It belongs to the RapZ-like family.

Functionally, displays ATPase and GTPase activities. The polypeptide is Nucleotide-binding protein RALTA_A0325 (Cupriavidus taiwanensis (strain DSM 17343 / BCRC 17206 / CCUG 44338 / CIP 107171 / LMG 19424 / R1) (Ralstonia taiwanensis (strain LMG 19424))).